The primary structure comprises 145 residues: 3-hydroxyacyl-[acyl-carrier-protein] dehydratase FabZ (145 aa).

The active site involves His50.

The protein belongs to the thioester dehydratase family. FabZ subfamily.

The protein resides in the cytoplasm. The catalysed reaction is a (3R)-hydroxyacyl-[ACP] = a (2E)-enoyl-[ACP] + H2O. Functionally, involved in unsaturated fatty acids biosynthesis. Catalyzes the dehydration of short chain beta-hydroxyacyl-ACPs and long chain saturated and unsaturated beta-hydroxyacyl-ACPs. The sequence is that of 3-hydroxyacyl-[acyl-carrier-protein] dehydratase FabZ from Coxiella burnetii (strain CbuK_Q154) (Coxiella burnetii (strain Q154)).